We begin with the raw amino-acid sequence, 179 residues long: Large ribosomal subunit protein uL5 (179 aa).

The protein belongs to the universal ribosomal protein uL5 family. As to quaternary structure, part of the 50S ribosomal subunit; part of the 5S rRNA/L5/L18/L25 subcomplex. Contacts the 5S rRNA and the P site tRNA. Forms a bridge to the 30S subunit in the 70S ribosome.

Functionally, this is one of the proteins that bind and probably mediate the attachment of the 5S RNA into the large ribosomal subunit, where it forms part of the central protuberance. In the 70S ribosome it contacts protein S13 of the 30S subunit (bridge B1b), connecting the 2 subunits; this bridge is implicated in subunit movement. Contacts the P site tRNA; the 5S rRNA and some of its associated proteins might help stabilize positioning of ribosome-bound tRNAs. This is Large ribosomal subunit protein uL5 from Staphylococcus epidermidis (strain ATCC 35984 / DSM 28319 / BCRC 17069 / CCUG 31568 / BM 3577 / RP62A).